A 295-amino-acid polypeptide reads, in one-letter code: Ribosomal protein L11 methyltransferase (295 aa).

Thr150, Gly171, Asp193, and Asn232 together coordinate S-adenosyl-L-methionine.

Belongs to the methyltransferase superfamily. PrmA family.

It localises to the cytoplasm. It catalyses the reaction L-lysyl-[protein] + 3 S-adenosyl-L-methionine = N(6),N(6),N(6)-trimethyl-L-lysyl-[protein] + 3 S-adenosyl-L-homocysteine + 3 H(+). Its function is as follows. Methylates ribosomal protein L11. In Methylobacillus flagellatus (strain ATCC 51484 / DSM 6875 / VKM B-1610 / KT), this protein is Ribosomal protein L11 methyltransferase.